The chain runs to 159 residues: Eukaryotic translation initiation factor 5A-2 (159 aa).

The segment covering 1–10 (MSDDEHHFEA) has biased composition (basic and acidic residues). The segment at 1-25 (MSDDEHHFEASESGASKTYPQSAGN) is disordered. Ser-2 is subject to Phosphoserine. Residues 13-24 (SGASKTYPQSAG) show a composition bias toward polar residues. Residue Lys-51 is modified to Hypusine.

The protein belongs to the eIF-5A family. Homodimer. Interacts with AHK4 and AHP1. Cytokinin regulates the formation of the AHP1-AHK4-ELF5A-2 complex. Lys-51 undergoes hypusination, a unique post-translational modification that consists in the addition of a butylamino group from spermidine to lysine side chain, leading to the formation of the unusual amino acid hypusine. eIF-5As are the only known proteins to undergo this modification, which is essential for their function. Ubiquitous. In roots, expressed mostly inside the stele of the mature zone.

It is found in the cytoplasm. Its subcellular location is the nucleus. Translation factor that promotes translation elongation and termination, particularly upon ribosome stalling at specific amino acid sequence contexts. Binds between the exit (E) and peptidyl (P) site of the ribosome and promotes rescue of stalled ribosome: specifically required for efficient translation of polyproline-containing peptides as well as other motifs that stall the ribosome. Acts as a ribosome quality control (RQC) cofactor by joining the RQC complex to facilitate peptidyl transfer during CAT tailing step. Regulates cytokinin-mediated root protoxylem specification and represses secifically the expression of AHP6. Regulates the induction of programmed cell death caused by infection with virulent pathogen. The protein is Eukaryotic translation initiation factor 5A-2 (ELF5A-2) of Arabidopsis thaliana (Mouse-ear cress).